Consider the following 423-residue polypeptide: Glutamate-1-semialdehyde 2,1-aminomutase (423 aa).

Lys266 carries the post-translational modification N6-(pyridoxal phosphate)lysine.

Belongs to the class-III pyridoxal-phosphate-dependent aminotransferase family. HemL subfamily. Homodimer. Requires pyridoxal 5'-phosphate as cofactor.

The protein resides in the cytoplasm. It catalyses the reaction (S)-4-amino-5-oxopentanoate = 5-aminolevulinate. It functions in the pathway porphyrin-containing compound metabolism; protoporphyrin-IX biosynthesis; 5-aminolevulinate from L-glutamyl-tRNA(Glu): step 2/2. This chain is Glutamate-1-semialdehyde 2,1-aminomutase, found in Nitratidesulfovibrio vulgaris (strain ATCC 29579 / DSM 644 / CCUG 34227 / NCIMB 8303 / VKM B-1760 / Hildenborough) (Desulfovibrio vulgaris).